Reading from the N-terminus, the 318-residue chain is Pantothenate kinase (318 aa).

ATP is bound at residue Gly-96 to Ser-103.

The protein belongs to the prokaryotic pantothenate kinase family.

The protein localises to the cytoplasm. The enzyme catalyses (R)-pantothenate + ATP = (R)-4'-phosphopantothenate + ADP + H(+). It functions in the pathway cofactor biosynthesis; coenzyme A biosynthesis; CoA from (R)-pantothenate: step 1/5. The protein is Pantothenate kinase of Coxiella burnetii (strain CbuK_Q154) (Coxiella burnetii (strain Q154)).